The chain runs to 264 residues: tRNA pseudouridine synthase A (264 aa).

Asp-51 serves as the catalytic Nucleophile. Residue Tyr-109 participates in substrate binding.

It belongs to the tRNA pseudouridine synthase TruA family. In terms of assembly, homodimer.

It carries out the reaction uridine(38/39/40) in tRNA = pseudouridine(38/39/40) in tRNA. In terms of biological role, formation of pseudouridine at positions 38, 39 and 40 in the anticodon stem and loop of transfer RNAs. This Photorhabdus laumondii subsp. laumondii (strain DSM 15139 / CIP 105565 / TT01) (Photorhabdus luminescens subsp. laumondii) protein is tRNA pseudouridine synthase A.